Here is a 93-residue protein sequence, read N- to C-terminus: Peptide YY-like (93 aa).

The N-terminal stretch at 1–27 (MVSPRVRLAALALSVCAILCLGMHASA) is a signal peptide. Tyrosine 63 is subject to Tyrosine amide. A propeptide spans 65-93 (KRALTPENWIYRDPAEERVTYGLDDYAMW) (C-terminal extension).

Belongs to the NPY family. As to expression, gut and medial reticulospinal neuron system in the brainstem.

The protein localises to the secreted. Functionally, gastrointestinal hormone and neuropeptide. The protein is Peptide YY-like (pyy) of Lampetra fluviatilis (European river lamprey).